A 429-amino-acid polypeptide reads, in one-letter code: Histidine--tRNA ligase (429 aa).

The protein belongs to the class-II aminoacyl-tRNA synthetase family. In terms of assembly, homodimer.

The protein resides in the cytoplasm. The catalysed reaction is tRNA(His) + L-histidine + ATP = L-histidyl-tRNA(His) + AMP + diphosphate + H(+). The chain is Histidine--tRNA ligase from Streptococcus pneumoniae serotype 4 (strain ATCC BAA-334 / TIGR4).